The primary structure comprises 541 residues: Glutamine-dependent NAD(+) synthetase (541 aa).

The region spanning 4-243 (FKIALAQFSP…EELYYSEFDI (240 aa)) is the CN hydrolase domain. Glu44 (proton acceptor; for glutaminase activity) is an active-site residue. Catalysis depends on Lys111, which acts as the For glutaminase activity. Residue Tyr117 coordinates L-glutamine. Catalysis depends on Cys147, which acts as the Nucleophile; for glutaminase activity. Residues Ser173 and Lys179 each coordinate L-glutamine. 286-293 (GLSGGIDS) serves as a coordination point for ATP. Asn369 contributes to the deamido-NAD(+) binding site. Residue Thr393 participates in ATP binding. Positions 398 and 510 each coordinate deamido-NAD(+).

In the C-terminal section; belongs to the NAD synthetase family.

The enzyme catalyses deamido-NAD(+) + L-glutamine + ATP + H2O = L-glutamate + AMP + diphosphate + NAD(+) + H(+). It functions in the pathway cofactor biosynthesis; NAD(+) biosynthesis; NAD(+) from deamido-NAD(+) (L-Gln route): step 1/1. Functionally, catalyzes the ATP-dependent amidation of deamido-NAD to form NAD. Uses L-glutamine as a nitrogen source. In vitro, can also use ammonia as donor with comparable specific activity, but cannot use nicotinate mononucleotide (NaMN) as substrate. This is Glutamine-dependent NAD(+) synthetase from Acinetobacter baylyi (strain ATCC 33305 / BD413 / ADP1).